Consider the following 486-residue polypeptide: Cardiolipin synthase A (486 aa).

The next 2 helical transmembrane spans lie at Thr-3–Val-23 and Met-38–Phe-58. 2 consecutive PLD phosphodiesterase domains span residues Met-219 to Arg-246 and Lys-399 to Ser-426. Active-site residues include His-224, Lys-226, Asp-231, His-404, Lys-406, and Asp-411.

It belongs to the phospholipase D family. Cardiolipin synthase subfamily. ClsA sub-subfamily.

It localises to the cell inner membrane. The catalysed reaction is 2 a 1,2-diacyl-sn-glycero-3-phospho-(1'-sn-glycerol) = a cardiolipin + glycerol. Functionally, catalyzes the reversible phosphatidyl group transfer from one phosphatidylglycerol molecule to another to form cardiolipin (CL) (diphosphatidylglycerol) and glycerol. The sequence is that of Cardiolipin synthase A from Pectobacterium atrosepticum (strain SCRI 1043 / ATCC BAA-672) (Erwinia carotovora subsp. atroseptica).